Consider the following 310-residue polypeptide: p-hydroxybenzoic acid efflux pump subunit AaeA (310 aa).

The chain crosses the membrane as a helical span at residues 12–32 (AITLVLVILAFIAIFRAWVYY).

It belongs to the membrane fusion protein (MFP) (TC 8.A.1) family.

Its subcellular location is the cell inner membrane. Functionally, forms an efflux pump with AaeB. The sequence is that of p-hydroxybenzoic acid efflux pump subunit AaeA from Escherichia fergusonii (strain ATCC 35469 / DSM 13698 / CCUG 18766 / IAM 14443 / JCM 21226 / LMG 7866 / NBRC 102419 / NCTC 12128 / CDC 0568-73).